The primary structure comprises 56 residues: Small ribosomal subunit protein uS14 (56 aa).

Zn(2+)-binding residues include cysteine 21, cysteine 24, cysteine 39, and cysteine 42.

It belongs to the universal ribosomal protein uS14 family. Zn(2+) is required as a cofactor.

This is Small ribosomal subunit protein uS14 (rps29A) from Guillardia theta (Cryptophyte).